Here is a 203-residue protein sequence, read N- to C-terminus: Glycerol-3-phosphate acyltransferase (203 aa).

The next 5 helical transmembrane spans lie at 5–25, 55–75, 84–104, 118–138, and 159–179; these read IYIA…GLIL, LAAA…IVAA, IAAN…LFPV, IGVL…MWLA, and IFLW…LTLL.

Belongs to the PlsY family. As to quaternary structure, probably interacts with PlsX.

The protein localises to the cell inner membrane. The enzyme catalyses an acyl phosphate + sn-glycerol 3-phosphate = a 1-acyl-sn-glycero-3-phosphate + phosphate. Its pathway is lipid metabolism; phospholipid metabolism. In terms of biological role, catalyzes the transfer of an acyl group from acyl-phosphate (acyl-PO(4)) to glycerol-3-phosphate (G3P) to form lysophosphatidic acid (LPA). This enzyme utilizes acyl-phosphate as fatty acyl donor, but not acyl-CoA or acyl-ACP. The protein is Glycerol-3-phosphate acyltransferase of Rhodopseudomonas palustris (strain ATCC BAA-98 / CGA009).